The sequence spans 806 residues: Transitional endoplasmic reticulum ATPase (806 aa).

Ala2 carries the post-translational modification N-acetylalanine. Phosphoserine occurs at positions 3 and 7. A Glycyl lysine isopeptide (Lys-Gly) (interchain with G-Cter in SUMO2) cross-link involves residue Lys8. Ser13 carries the post-translational modification Phosphoserine. Lys18 participates in a covalent cross-link: Glycyl lysine isopeptide (Lys-Gly) (interchain with G-Cter in SUMO2). Ser37 bears the Phosphoserine mark. Position 247 to 253 (Pro247 to Leu253) interacts with ATP. An N6,N6,N6-trimethyllysine; by VCPKMT modification is found at Lys315. Residues Asn348 and His384 each coordinate ATP. The residue at position 436 (Thr436) is a Phosphothreonine. Ser462 carries the post-translational modification Phosphoserine. Residues Lys502 and Lys505 each carry the N6-acetyllysine modification. Gly521–Leu526 provides a ligand contact to ATP. Lys668 bears the N6-acetyllysine; alternate mark. Lys668 is modified (N6-succinyllysine; alternate). Phosphoserine is present on Ser702. The interval Arg708–Pro727 is disordered. The residue at position 754 (Lys754) is an N6-acetyllysine. The disordered stretch occupies residues Phe768 to Gly806. Residues Ser770, Ser775, and Ser787 each carry the phosphoserine modification. Positions Asn777 to Gly793 are enriched in gly residues. The interaction with UBXN6 stretch occupies residues Thr797–Gly806. Tyr805 carries the post-translational modification Phosphotyrosine.

It belongs to the AAA ATPase family. In terms of assembly, homohexamer. Forms a ring-shaped particle of 12.5 nm diameter, that displays 6-fold radial symmetry. Part of a ternary complex containing STX5A, NSFL1C and VCP. NSFL1C forms a homotrimer that binds to one end of a VCP homohexamer. The complex binds to membranes enriched in phosphatidylethanolamine-containing lipids and promotes Golgi membrane fusion. Binds to a heterodimer of NPLOC4 and UFD1, binding to this heterodimer inhibits Golgi-membrane fusion. Interaction with VCIP135 leads to dissociation of the complex via ATP hydrolysis by VCP. Part of a ternary complex containing NPLOC4, UFD1 and VCP. Interacts with NSFL1C-like protein p37; the complex has membrane fusion activity and is required for Golgi and endoplasmic reticulum biogenesis. Interacts with SELENOS and SYVN1, as well as with DERL1 (via SHP-box motif), DERL2 and DERL3; which probably transfer misfolded proteins from the ER to VCP. Interacts with SVIP and DERL1. Component of a complex required to couple retrotranslocation, ubiquitination and deglycosylation composed of NGLY1, SAKS1, AMFR, VCP and RAD23B. Part of a complex composed of STUB1/CHIP, VCP/p97, CHRNA3, and UBXN2A that modulates the ubiquitination and endoplasmic reticulum-associated degradation (ERAD) of CHRNA3. Within the complex UBXN2A acts as a scaffold protein required for the interaction of CHRNA3 with VCP/p97, this interaction also inhibits CHRNA3 ubiquitination by STUB1/CHIP and subsequently ERAD. Interacts with UBXN2A (via UBX domain); the interaction is required for the interaction of CHRNA3 in the STUB1-VCP-UBXN2A complex. Directly interacts with UBXN4 and RNF19A. Interacts with CASR. Interacts with UBE4B and YOD1. Interacts with clathrin. Interacts with RNF103. Interacts with TRIM13 and TRIM21. Component of a VCP/p97-AMFR/gp78 complex that participates in the final step of the endoplasmic reticulum-associated degradation (ERAD) of HMGCR. Interacts directly with AMFR/gp78 (via its VIM). Interacts with RHBDD1 (via C-terminal domain). Interacts with SPRTN; leading to recruitment to stalled replication forks. Interacts with WASHC5. Interacts with UBOX5. Interacts (via N-terminus) with UBXN7, UBXN8, and probably several other UBX domain-containing proteins (via UBX domains); the interactions are mutually exclusive with VIM-dependent interactions such as those with AMFR and SELENOS. Forms a complex with UBQLN1 and UBXN4. Interacts (via the PIM motif) with RNF31 (via the PUB domain). Interacts with RIGI and RNF125; interaction takes place when RIGI is ubiquitinated via 'Lys-63'-linked ubiquitin on its CARD domains, leading to recruit RNF125 and promote ubiquitination and degradation of RIGI. Interacts with BAG6. Interacts with UBXN10. Interacts with UBXN6; the interaction with UBXN6 is direct and competitive with UFD1. Forms a ternary complex with CAV1 and UBXN6. Interacts with PLAA, UBXN6 and YOD1; may form a complex involved in macroautophagy. Interacts with ANKZF1. Interacts with ubiquitin-binding protein FAF1. Interacts with ZFAND2B (via VIM motif); the interaction is direct. Interacts with ZFAND1 (via its ubiquitin-like region); this interaction occurs in an arsenite-dependent manner. Interacts with CCDC47. Interacts with LMBR1L and UBAC2. Interacts with ATXN3. Interacts with TEX264; bridging VCP to covalent DNA-protein cross-links (DPCs). The cofactor is Mg(2+). In terms of processing, ISGylated. Methylation at Lys-315 catalyzed by VCPKMT is increased in the presence of ASPSCR1. Lys-315 methylation may decrease ATPase activity. Post-translationally, phosphorylated by tyrosine kinases in response to T-cell antigen receptor activation. Phosphorylated in mitotic cells.

It localises to the cytoplasm. It is found in the cytosol. The protein localises to the endoplasmic reticulum. Its subcellular location is the nucleus. The protein resides in the stress granule. The catalysed reaction is ATP + H2O = ADP + phosphate + H(+). Functionally, necessary for the fragmentation of Golgi stacks during mitosis and for their reassembly after mitosis. Involved in the formation of the transitional endoplasmic reticulum (tER). The transfer of membranes from the endoplasmic reticulum to the Golgi apparatus occurs via 50-70 nm transition vesicles which derive from part-rough, part-smooth transitional elements of the endoplasmic reticulum (tER). Vesicle budding from the tER is an ATP-dependent process. The ternary complex containing UFD1, VCP and NPLOC4 binds ubiquitinated proteins and is necessary for the export of misfolded proteins from the ER to the cytoplasm, where they are degraded by the proteasome. The NPLOC4-UFD1-VCP complex regulates spindle disassembly at the end of mitosis and is necessary for the formation of a closed nuclear envelope. Regulates E3 ubiquitin-protein ligase activity of RNF19A. Component of the VCP/p97-AMFR/gp78 complex that participates in the final step of the sterol-mediated ubiquitination and endoplasmic reticulum-associated degradation (ERAD) of HMGCR. Mediates the endoplasmic reticulum-associated degradation of CHRNA3 in cortical neurons as part of the STUB1-VCP-UBXN2A complex. Involved in endoplasmic reticulum stress-induced pre-emptive quality control, a mechanism that selectively attenuates the translocation of newly synthesized proteins into the endoplasmic reticulum and reroutes them to the cytosol for proteasomal degradation. Involved in clearance process by mediating G3BP1 extraction from stress granules. Also involved in DNA damage response: recruited to double-strand breaks (DSBs) sites in a RNF8- and RNF168-dependent manner and promotes the recruitment of TP53BP1 at DNA damage sites. Recruited to stalled replication forks by SPRTN: may act by mediating extraction of DNA polymerase eta (POLH) to prevent excessive translesion DNA synthesis and limit the incidence of mutations induced by DNA damage. Together with SPRTN metalloprotease, involved in the repair of covalent DNA-protein cross-links (DPCs) during DNA synthesis. Involved in interstrand cross-link repair in response to replication stress by mediating unloading of the ubiquitinated CMG helicase complex. Mediates extraction of PARP1 trapped to chromatin: recognizes and binds ubiquitinated PARP1 and promotes its removal. Required for cytoplasmic retrotranslocation of stressed/damaged mitochondrial outer-membrane proteins and their subsequent proteasomal degradation. Essential for the maturation of ubiquitin-containing autophagosomes and the clearance of ubiquitinated protein by autophagy. Acts as a negative regulator of type I interferon production by interacting with RIGI: interaction takes place when RIGI is ubiquitinated via 'Lys-63'-linked ubiquitin on its CARD domains, leading to recruit RNF125 and promote ubiquitination and degradation of RIGI. May play a role in the ubiquitin-dependent sorting of membrane proteins to lysosomes where they undergo degradation. May more particularly play a role in caveolins sorting in cells. By controlling the steady-state expression of the IGF1R receptor, indirectly regulates the insulin-like growth factor receptor signaling pathway. This is Transitional endoplasmic reticulum ATPase (VCP) from Sus scrofa (Pig).